Consider the following 1007-residue polypeptide: MDPSRYGRQQEWDNNSAPEGYGTQHDPNHRFGVSYDDGYPDERLMRDDVYNYPPGHNTLGDLPQSRKRNYEENYPSELRRQEKPYIDSNYAADYYHDSEAGSRNGHYRDHEHERSSRYDGCDDYSCNDNNYRSKNYHHSRDDGREKDYDYTRRSYDSEYERASVRDGSRKSRDPQDRERNSRDREWDSRDREWDKRCYSRERDESPHKRYEKSRSRSTGRGEFSRSRSPRGRSHGRSYREDSYEGDHWNESERRREYEDRHNQDHFSATPSATVVVKGLSMKSTEEDLYQILAEWGPLHHVRVIREQNSGISRGFAFIDFPTVDAARTMMDRIEHDGIVLDGRKLMFHYSQPTGRAGVSRRQEHASRRSYGGSRNMIVPTDWICTICGCINFARRTSCFQCNEPKTKDSPSADVGLSNSAAGKRISETGPTHVLVVRGLDEDADEEMLRYEFSKHAPIKDLRLVRDKFTHVSRGFAFVHFYSVEDATKALEATNRTALERNGKILRVAYAKSVHGSGTGISAPSHSNNLAAAAIEAATFSQQYDGVGWAPKEYNTGEKQNTGGQAQGVGEIESQKGTSAPQSGYVWDEASGYYYDAASGYYYDGNSGLYYDSNSGLWYSYDQQTQQYVPCPDQNNESKVTENQPDSAKKEKSSQQKVIISAATTPNVEKVLSLPDAVQAAAAAAIASEKREKERVKEIKLASKTSLLASKKKMSNVLTMWKQRSHETQIQRPSPSLGDNPPTVSAEARSSFSTGQSMGKLKSDVIIAKERSTSNHGVSALTTAESSSSSTTGGTLMGVMRGSFGGTLGGASSSASVQMPPILPSASPASVSVSGSGRRRFSETPTAGPTHREQPQTSYRDRAAERRNLYGSSTSSGNDVIDSSEDLMGLRKGSSDPTPFPPGVGGRGITTSTEVSSFDVITEERAIDESNVGNRMLRNMGWHEGSGLGKDGSGMKEPVQAQGVDRRAGLGSQQKKVDAEFEVQPGDTYRTLLHKKALARFRDMSDNN.

Disordered stretches follow at residues 1-185 and 204-269; these read MDPS…RDRE and ESPH…FSAT. 4 stretches are compositionally biased toward basic and acidic residues: residues 40–49, 94–120, 138–185, and 204–214; these read PDERLMRDDV, YYHD…RYDG, HSRD…RDRE, and ESPHKRYEKSR. The segment covering 227-236 has biased composition (basic residues); that stretch reads RSPRGRSHGR. Positions 237–264 are enriched in basic and acidic residues; that stretch reads SYREDSYEGDHWNESERRREYEDRHNQD. Residues 272-352 form the RRM 1 domain; that stretch reads ATVVVKGLSM…RKLMFHYSQP (81 aa). A RanBP2-type zinc finger spans residues 378 to 407; the sequence is VPTDWICTICGCINFARRTSCFQCNEPKTK. In terms of domain architecture, RRM 2 spans 432–512; that stretch reads HVLVVRGLDE…KILRVAYAKS (81 aa). 6 disordered regions span residues 556–581, 631–656, 725–755, 771–797, 810–910, and 945–977; these read GEKQ…SAPQ, PDQN…SQQK, HETQ…STGQ, STSN…TLMG, ASSS…GITT, and SGLG…KKVD. Positions 631 to 645 are enriched in polar residues; sequence PDQNNESKVTENQPD. Composition is skewed to low complexity over residues 778-793 and 823-835; these read SALT…TTGG and PSAS…VSGS. The span at 849-867 shows a compositional bias: basic and acidic residues; the sequence is THREQPQTSYRDRAAERRN. One can recognise a G-patch domain in the interval 928–974; the sequence is ESNVGNRMLRNMGWHEGSGLGKDGSGMKEPVQAQGVDRRAGLGSQQK.

As to quaternary structure, interacts with the pre-spliceosomal component U2AF65A. As to expression, ubiquitous with highest expression in siliques toward the end of seed maturation.

The protein resides in the nucleus. Its function is as follows. Splicing factor that controls alternative splicing of the developmental regulator ABI3. Reduces splicing of a cryptic intron in ABI3, leading to a decreased in ABI3-beta transcript. Regulates the splicing of the receptor-like kinase SNC4/LRKL-2.6. The protein is SUPPRESSOR OF ABI3-5 of Arabidopsis thaliana (Mouse-ear cress).